Here is a 225-residue protein sequence, read N- to C-terminus: Small ribosomal subunit protein uS5 (225 aa).

Residues 57–120 form the S5 DRBM domain; sequence LEEQVLDVKL…AQAKLSLIKV (64 aa).

The protein belongs to the universal ribosomal protein uS5 family. As to quaternary structure, part of the 30S ribosomal subunit. Contacts protein S4.

Its function is as follows. With S4 and S12 plays an important role in translational accuracy. This chain is Small ribosomal subunit protein uS5, found in Methanococcus vannielii (strain ATCC 35089 / DSM 1224 / JCM 13029 / OCM 148 / SB).